The primary structure comprises 511 residues: TNF receptor-associated factor family protein DDB_G0290931 (511 aa).

An RING-type; degenerate zinc finger spans residues 27 to 67 (CPICFELIYKKSIYQCSSGHYACQECWEKSLEIKQECMICR). Residues 103–169 (IDGANQENED…RKLIKDEENG (67 aa)) adopt a coiled-coil conformation. The segment at 107–159 (NQENEDEENEDEENEDDEDENEDEENGEDDEDKDEDEENENENEENKDEENEK) is disordered. The segment covering 109 to 155 (ENEDEENEDEENEDDEDENEDEENGEDDEDKDEDEENENENEENKDE) has biased composition (acidic residues). 2 TRAF-type zinc fingers span residues 181–234 (RHIQ…QVQL) and 236–293 (NHYD…SELQ). Residues 324 to 358 (ELLLKEIEKSKITCSELQRKNDELSSLITEIDDNY) are a coiled coil. Residues 374–499 (GYTNKWIISN…DDKLTINIYV (126 aa)) form the MATH domain.

It belongs to the TNF receptor-associated factor family. A subfamily.

The protein resides in the cytoplasm. Its function is as follows. Probable adapter protein and signal transducer that links members of the tumor necrosis factor receptor family to different signaling pathways by association with the receptor cytoplasmic domain and kinases. This chain is TNF receptor-associated factor family protein DDB_G0290931, found in Dictyostelium discoideum (Social amoeba).